A 1679-amino-acid chain; its full sequence is [F-actin]-monooxygenase mical2b (1679 aa).

Residues 2 to 494 (GETEEERTSQ…RHLFISGEQD (493 aa)) are monooxygenase domain. FAD contacts are provided by residues C97, 97-125 (CGFR…SRNN), E116, R118, R123, N125, and D398. Residues 516 to 619 (EVRPGRLLLW…MVLYLSKFYE (104 aa)) enclose the Calponin-homology (CH) domain. The Nuclear localization signal motif lies at 658-679 (RKRIPKLDKKLEESDVNRKRKK). Disordered regions lie at residues 661–772 (IPKL…KAKW), 818–838 (SAYK…TPTL), 874–907 (SSLF…ESST), 1073–1163 (STRH…RSTA), 1194–1247 (KPED…DEIP), 1259–1283 (EYPK…ISFS), 1302–1342 (DLTN…PAPP), and 1473–1509 (RNKA…KKKE). Basic and acidic residues-rich tracts occupy residues 662 to 674 (PKLD…SDVN) and 697 to 707 (GEREEQKENKV). The segment covering 874–888 (SSLFTGNPAQPQTDE) has biased composition (polar residues). The region spanning 1011–1073 (DTCVFCQKRV…KMHFSQRKTS (63 aa)) is the LIM zinc-binding domain. Residues 1086 to 1099 (IRSSSITISNHTST) show a composition bias toward low complexity. The span at 1112–1123 (DSSTQQDLQTLP) shows a compositional bias: polar residues. The span at 1133-1143 (EVKDSSKKADP) shows a compositional bias: basic and acidic residues. Residues 1144 to 1154 (ADSAPACPDSP) show a composition bias toward low complexity. Over residues 1202–1211 (LAEEDGNSDF) the composition is skewed to acidic residues. The segment covering 1220–1242 (SKKPSNPSTDSNCLPTKDNSSTP) has biased composition (polar residues). Low complexity predominate over residues 1259-1270 (EYPKPSSSSPEP). Residues 1302–1325 (DLTNPGKSGAEEQQQQHVKPSISL) show a composition bias toward polar residues. Residues 1333-1342 (THPQPEPAPP) are compositionally biased toward pro residues. Residues 1475–1489 (KASAQQQQQQKSNSS) are compositionally biased toward low complexity. The bMERB domain maps to 1517 to 1667 (KSDELKRLHR…EKAEDRDLES (151 aa)).

The protein belongs to the Mical family. FAD is required as a cofactor.

The protein localises to the nucleus. It is found in the cytoplasm. It carries out the reaction L-methionyl-[F-actin] + NADPH + O2 + H(+) = L-methionyl-(R)-S-oxide-[F-actin] + NADP(+) + H2O. Its function is as follows. Nuclear monooxygenase that promotes depolymerization of F-actin by mediating oxidation of specific methionine residues on actin and regulates the srf signaling. Acts by modifying nuclear actin subunits through the addition of oxygen to form methionine-sulfoxide, leading to promote actin filament severing and prevent repolymerization. Acts as a key regulator of the srf signaling pathway elicited by nerve growth factor and serum: mediates oxidation and subsequent depolymerization of nuclear actin, leading to increase mkl1/mrtf-a presence in the nucleus and promote srf:mkl1/mrtf-a-dependent gene transcription. In Danio rerio (Zebrafish), this protein is [F-actin]-monooxygenase mical2b.